The sequence spans 324 residues: MLEKIINRENLSFEEAYNLFKELMNESDVRIAAYLAAFQTKGYTAEEIAGLAKAMRDYAIKLELGEVADTAGTGGDGSSSINVSTASALILSAFTKVAKHGNVSITSKSGSANVLEALGLNIKIPPEKARKMIEKTNFTFIFAPMYHPALKRIMPVRRELKVKTVFNILGPLANPAEPKFQVLGVNSPDLVEKMAEALSFLGVERALVVHGMGLDEVNPRGETIVAEVNGEDIDMYTLTPEDFGVERVKVVPCNSPQESAERIKAVLRGEGKVEDRNFILINASAALYASKVAEDFREGVELVKGILGEPMSKKLEEIICTSRS.

5-phospho-alpha-D-ribose 1-diphosphate is bound by residues Gly-72, 75 to 76, Ser-80, 82 to 85, 99 to 107, and Ser-111; these read GD, NVST, and KHGNVSITS. Gly-72 contacts anthranilate. Ser-84 contacts Mg(2+). Asn-102 contacts anthranilate. Arg-157 provides a ligand contact to anthranilate. Positions 215 and 216 each coordinate Mg(2+).

Belongs to the anthranilate phosphoribosyltransferase family. In terms of assembly, homodimer. Mg(2+) is required as a cofactor.

It carries out the reaction N-(5-phospho-beta-D-ribosyl)anthranilate + diphosphate = 5-phospho-alpha-D-ribose 1-diphosphate + anthranilate. It participates in amino-acid biosynthesis; L-tryptophan biosynthesis; L-tryptophan from chorismate: step 2/5. Its function is as follows. Catalyzes the transfer of the phosphoribosyl group of 5-phosphorylribose-1-pyrophosphate (PRPP) to anthranilate to yield N-(5'-phosphoribosyl)-anthranilate (PRA). The chain is Anthranilate phosphoribosyltransferase from Pyrococcus abyssi (strain GE5 / Orsay).